A 2527-amino-acid chain; its full sequence is Neurogenic locus notch homolog protein 1 (2527 aa).

The first 36 residues, 1–36 (MGRSDSRAGALLEGGCEQNIDPRRAAHCHHPRLATS), serve as a signal peptide directing secretion. Residues 37-1741 (SLRCSQPSGT…VEPPLPSQLH (1705 aa)) lie on the Extracellular side of the membrane. 33 disulfides stabilise this stretch: C40/C53, C47/C62, C64/C73, C79/C90, C84/C103, C105/C114, C122/C133, C127/C143, C145/C154, C160/C171, C165/C180, C182/C191, C198/C211, C205/C220, C222/C231, C238/C249, C243/C259, C261/C270, C277/C288, C282/C297, C299/C308, C315/C328, C322/C337, C339/C348, C355/C366, C360/C375, C377/C386, C392/C403, C397/C414, C416/C425, C432/C445, C439/C454, and C456/C465. N57 carries an N-linked (GlcNAc...) asparagine glycan. 3 consecutive EGF-like domains span residues 75-115 (DPNP…PLCL), 118-155 (LDNA…KSCQ), and 156-192 (QADP…PTCR). O-linked (Glc...) serine glycosylation occurs at S81. The O-linked (Fuc...) threonine glycan is linked to T89. Residue T132 is glycosylated (O-linked (Fuc...) threonine). A glycan (O-linked (Glc...) serine) is linked at S162. One can recognise an EGF-like 4; calcium-binding domain in the interval 194–232 (DVNECSQNPGLCRHGGTCHNEIGSYRCVCRATHTGPHCE). Residue T210 is glycosylated (O-linked (Fuc...) threonine). Residues 234–271 (PYVPCSPSPCQNGGTCRPTGDTTHECACLPGFAGQNCE) enclose the EGF-like 5 domain. T248 carries an O-linked (Fuc...) threonine; alternate glycan. T248 is a glycosylation site (O-linked (GalNAc...) threonine; alternate). The EGF-like 6; calcium-binding domain maps to 273-309 (NVDDCPGNNCKNGGACVDGVNTYNCRCPPEWTGQYCT). The region spanning 311-349 (DVDECQLMPNACQNGGTCHNTHGGYNCVCVNGWTGEDCS) is the EGF-like 7; calcium-binding domain. O-linked (Fuc...) threonine glycosylation occurs at T327. An EGF-like 8; calcium-binding domain is found at 351–387 (NIDDCASAACFQGATCHDRVASFYCECPHGRTGLLCH). An O-linked (Glc...) serine glycan is attached at S357. The O-linked (Fuc...) threonine glycan is linked to T365. Residues 388-426 (LNDACISNPCNEGSNCDTNPVNGKAICTCPSGYTGPACS) enclose the EGF-like 9 domain. S394 is a glycosylation site (O-linked (Glc...) serine). The EGF-like 10; calcium-binding domain maps to 428–466 (DVDECALGANPCEHAGKCLNTLGSFECQCLQGYTGPRCE). Residues 436–437 (AN) form an interaction with DLL4 region. Ca(2+) contacts are provided by T448 and S451. O-linked (Glc...) serine glycosylation occurs at S451. The tract at residues 464–468 (RCEID) is interaction with DLL4. Ca(2+) is bound by residues D468, V469, and E471. The EGF-like 11; calcium-binding domain occupies 468–504 (DVNECISNPCQNDATCLDQIGEFQCICMPGYEGVYCE). 3 disulfide bridges follow: C472–C483, C477–C492, and C494–C503. S474 is a glycosylation site (O-linked (Glc...) serine). A glycan (O-linked (Fuc...) threonine) is linked at T482. Positions 485 and 486 each coordinate Ca(2+). 3 residues coordinate Ca(2+): N506, T507, and E509. Positions 506–542 (NTDECASSPCLHNGHCMDKINEFLCQCPKGFSGHLCQ) constitute an EGF-like 12; calcium-binding domain. Intrachain disulfides connect C510–C521, C515–C530, C532–C541, C548–C559, C553–C568, C570–C579, C586–C596, C591–C605, C607–C616, C623–C634, C628–C643, C645–C654, C661–C671, C666–C680, C682–C691, C698–C709, C703–C718, C720–C729, C736–C746, C741–C755, C757–C766, C773–C784, C778–C793, C795–C804, C811–C822, C816–C831, C833–C842, and C849–C860. An O-linked (Glc...) serine glycan is attached at S512. Residues D523 and K524 each contribute to the Ca(2+) site. Positions 544 to 580 (DVDECASTPCKNGAKCLDGPNTYTCVCTEGYTGTHCE) constitute an EGF-like 13; calcium-binding domain. A glycan (O-linked (Glc...) serine) is linked at S550. One can recognise an EGF-like 14; calcium-binding domain in the interval 582 to 617 (DIDECDPDPCHYGFCKDGVATFTCLCQPGYTGHHCE). The EGF-like 15; calcium-binding domain maps to 619 to 655 (NINECHSQPCRHGGTCQDRDNSYLCLCLKGTTGPNCE). The O-linked (Glc...) serine glycan is linked to S625. T633 is a glycosylation site (O-linked (Fuc...) threonine). The EGF-like 16; calcium-binding domain occupies 657–692 (NLDDCASNPCDSGTCLDKIDGYECACEPGYTGSMCN). O-linked (Glc...) serine glycosylation is present at S663. The 37-residue stretch at 694-730 (NIDECAGSPCHNGGTCEDGIAGFTCRCPEGYHDPTCL) folds into the EGF-like 17; calcium-binding domain. O-linked (Fuc...) threonine glycosylation is present at T708. Residues 732 to 767 (EVNECNSNPCIHGACRDGLNGYKCDCAPGWSGTNCD) form the EGF-like 18; calcium-binding domain. A glycan (O-linked (Glc...) serine) is linked at S738. One can recognise an EGF-like 19 domain in the interval 769–805 (NNNECESNPCVNGGTCKDMTSGYVCTCREGFSGPNCQ). S775 carries O-linked (Glc...) serine glycosylation. Residue T783 is glycosylated (O-linked (Fuc...) threonine). An O-linked (GlcNAc) serine glycan is attached at S800. Residues 807–843 (NINECASNPCLNQGTCIDDVAGYKCNCPLPYTGATCE) form the EGF-like 20; calcium-binding domain. The O-linked (Glc...) serine glycan is linked to S813. An O-linked (Fuc...) threonine glycan is attached at T821. An EGF-like 21 domain is found at 845-883 (VLAPCATSPCKNSGVCKESEDYESFSCVCPTGWQGQTCE). One can recognise an EGF-like 22; calcium-binding domain in the interval 885 to 921 (DINECVKSPCRHGASCQNTNGSYRCLCQAGYTGRNCE). The N-linked (GlcNAc...) asparagine glycan is linked to N904. T916 carries an O-linked (GlcNAc) threonine glycan. The EGF-like 23 domain maps to 923–959 (DIDDCRPNPCHNGGSCTDGINMAFCDCLPGFQGAFCE). O-linked (Fuc) serine glycosylation occurs at S937. The EGF-like 24; calcium-binding domain maps to 961–997 (DINECASNPCRNGANCTDCVDSYTCTCPAGFNGIHCE). S967 carries O-linked (Glc...) serine glycosylation. N-linked (GlcNAc...) asparagine glycosylation occurs at N975. EGF-like domains are found at residues 999-1035 (NTPD…SYCQ), 1037-1073 (DVNE…LNCQ), 1075-1111 (LVHW…FNCD), 1113-1159 (LSVS…SYCE), and 1161-1197 (EVDE…SNCS). T1013 is a glycosylation site (O-linked (Fuc...) threonine). S1043 is a glycosylation site (O-linked (Glc...) serine). T1051 carries O-linked (Fuc...) threonine glycosylation. S1081 carries O-linked (Glc...) serine glycosylation. C1117 and C1138 are disulfide-bonded. O-linked (Fuc...) threonine glycosylation is present at T1175. N1195 is a glycosylation site (N-linked (GlcNAc...) asparagine). The 37-residue stretch at 1199-1235 (EINECLSQPCQNGGTCIDLTNTYKCSCPRGTQGVHCE) folds into the EGF-like 30; calcium-binding domain. A glycan (O-linked (Glc...) serine) is linked at S1205. The O-linked (Fuc...) threonine glycan is linked to T1213. The EGF-like 31; calcium-binding domain maps to 1237 to 1281 (NVDDCHPHLDPASRSPKCFNNGTCVDQVGGYSCTCPPGFVGERCE). N1257 carries N-linked (GlcNAc...) asparagine glycosylation. 4 EGF-like domains span residues 1283–1321 (DINE…RRCE), 1323–1362 (VING…ATCE), 1364–1400 (DART…PECQ), and 1403–1442 (ASSP…LLCH). S1289 carries O-linked (Glc...) serine glycosylation. Residue T1378 is glycosylated (O-linked (Fuc...) threonine). An O-linked (GlcNAc...) threonine glycan is attached at T1395. O-linked (Fuc...) threonine; alternate glycosylation is present at T1418. An O-linked (GalNAc...) threonine; alternate glycan is attached at T1418. LNR repeat units follow at residues 1465–1505 (CELP…PWKN), 1506–1547 (CTQS…CNPL), and 1548–1587 (YDQY…RLAA). Residues D1473, N1476, D1491, and D1494 each contribute to the Ca(2+) site. N1505 carries an N-linked (GlcNAc...) asparagine glycan. N-linked (GlcNAc...) asparagine glycosylation occurs at N1603. A glycan (O-linked (GalNAc...) threonine) is linked at T1731. The interaction with PSEN1 stretch occupies residues 1734-1766 (PPLPSQLHLMYLAAAAFVLLFFVGCGVLLSRKR). A helical membrane pass occupies residues 1742-1762 (LMYLAAAAFVLLFFVGCGVLL). The Cytoplasmic segment spans residues 1763 to 2527 (SRKRRRQHGQ…QITHIPEAFK (765 aa)). A Glycyl lysine isopeptide (Lys-Gly) (interchain with G-Cter in ubiquitin) cross-link involves residue K1765. The tract at residues 1786-1814 (KKKRREPLGEDSVGLKPLKNASDGALMDD) is disordered. T1867 is subject to Phosphothreonine. 5 ANK repeats span residues 1933-1962 (TGET…DANI), 1966-1996 (MGRT…DLDA), 2000-2029 (DGTT…DVNA), 2033-2062 (LGKS…NKDM), and 2066-2095 (KEET…NRDI). Positions 1953-1961 (LLEASADAN) are HIF1AN-binding. A (3S)-3-hydroxyasparagine; by HIF1AN; partial modification is found at N1961. Residues 2020–2028 (LINSHADVN) are HIF1AN-binding. Position 2028 is a (3S)-3-hydroxyasparagine; by HIF1AN (N2028). Disordered regions lie at residues 2157–2201 (SATQ…DSSS), 2378–2424 (QPQN…SLPV), and 2436–2527 (PTSL…EAFK). A compositionally biased stretch (low complexity) spans 2378-2391 (QPQNLQPPSQPHLS). Residues 2436-2474 (PTSLPSSMVPPMTTTQFLTPPSQHSYSSSPVDNTPSHQL) show a composition bias toward polar residues. The segment covering 2484 to 2499 (PSPESPDQWSSSSPHS) has biased composition (low complexity). Positions 2500–2520 (NISDWSEGISSPPTSMPSQIT) are enriched in polar residues.

The protein belongs to the NOTCH family. Heterodimer of a C-terminal fragment N(TM) and an N-terminal fragment N(EC) which are probably linked by disulfide bonds. Interacts with DNER, DTX1, DTX2 and RBPJ/RBPSUH. Also interacts with MAML1, MAML2 and MAML3 which act as transcriptional coactivators for NOTCH1. Notch 1 intracellular domain interacts with SNW1; the interaction involves multimerized NOTCH1 NICD and is implicated in a formation of an intermediate preactivation complex which associates with DNA-bound CBF-1/RBPJ. The activated membrane-bound form interacts with AAK1 which promotes NOTCH1 stabilization. Forms a trimeric complex with FBXW7 and SGK1. Interacts with HIF1AN. HIF1AN negatively regulates the function of notch intracellular domain (NICD), accelerating myogenic differentiation. Interacts (via NICD) with SNAI1 (via zinc fingers); the interaction induces SNAI1 degradation via MDM2-mediated ubiquitination and inhibits SNAI1-induced cell invasion. Interacts (via NICD) with MDM2A. Interacts (via NICD) with BCL6; the interaction decreases MAML1 recruitment by NOTCH1 NICD on target genes DNA and inhibits NOTCH1 transactivation activity. Interacts with THBS4. Interacts (via the EGF-like repeat region) with CCN3 (via CTCK domain). Interacts (via EGF-like domains) with DLL4 (via N-terminal DSL and MNNL domains). Interacts with ZMIZ1. Interacts (via NICD domain) with MEGF10 (via the cytoplasmic domain). Interacts with DLL1 and JAG1. Interacts (via NICD domain) with PRAG1. Forms a complex with PRAG1, N1ICD and MAML1, in a MAML1-dependent manner. Interacts (via transmembrane region) with PSEN1; the interaction is direct. Interacts with ZFP64. In terms of processing, synthesized in the endoplasmic reticulum as an inactive form which is proteolytically cleaved by a furin-like convertase in the trans-Golgi network before it reaches the plasma membrane to yield an active, ligand-accessible form. Cleavage results in a C-terminal fragment N(TM) and a N-terminal fragment N(EC). Following ligand binding, it is cleaved by ADAM17 to yield a membrane-associated intermediate fragment called notch extracellular truncation (NEXT). Following endocytosis, this fragment is then cleaved by one of the catalytic subunits of gamma-secretase (PSEN1 or PSEN2) to release a Notch-derived peptide containing the intracellular domain (NICD) from the membrane. Phosphorylated. Post-translationally, O-linked glycosylation by GALNT11 is involved in determination of left/right symmetry: glycosylation promotes activation of NOTCH1, possibly by promoting cleavage by ADAM17, modulating the balance between motile and immotile (sensory) cilia at the left-right organiser (LRO). O-glycosylated on the EGF-like domains. O-glucosylated at Ser-451 by KDELC1 and KDELC2. Contains both O-linked fucose and O-linked glucose in the EGF-like domains 11, 12 and 13, which are interacting with the residues on DLL4. MFNG-, RFNG- and LFNG-mediated modification of O-fucose residues at specific EGF-like domains results in inhibition of its activation by JAG1 and enhancement of its activation by DLL1 via an increased binding to DLL1. In terms of processing, ubiquitinated. Undergoes 'Lys-29'-linked polyubiquitination by ITCH; promotes the lysosomal degradation of non-activated internalized NOTCH1. Deubiquitination by USP12 is required for transport of internalized non-activated receptor from late endosomes to lysosomes for degradation. Monoubiquitination at Lys-1765 is required for activation by gamma-secretase cleavage, it promotes interaction with AAK1, which stabilizes it. Deubiquitination by EIF3F is necessary for nuclear import of activated Notch. Hydroxylated at Asn-1961 by HIF1AN. Hydroxylated at Asn-2028 by HIF1AN. Hydroxylation reduces affinity for HI1AN and may thus indirectly modulate negative regulation of NICD.

The protein resides in the cell membrane. It is found in the late endosome membrane. The protein localises to the nucleus. Functions as a receptor for membrane-bound ligands Jagged-1 (JAG1), Jagged-2 (JAG2) and Delta-1 (DLL1) to regulate cell-fate determination. Upon ligand activation through the released notch intracellular domain (NICD) it forms a transcriptional activator complex with RBPJ/RBPSUH and activates genes of the enhancer of split locus. Affects the implementation of differentiation, proliferation and apoptotic programs. Involved in angiogenesis; negatively regulates endothelial cell proliferation and migration and angiogenic sprouting. Involved in the maturation of both CD4(+) and CD8(+) cells in the thymus. Important for follicular differentiation and possibly cell fate selection within the follicle. During cerebellar development, functions as a receptor for neuronal DNER and is involved in the differentiation of Bergmann glia. Represses neuronal and myogenic differentiation. May play an essential role in postimplantation development, probably in some aspect of cell specification and/or differentiation. May be involved in mesoderm development, somite formation and neurogenesis. May enhance HIF1A function by sequestering HIF1AN away from HIF1A. Required for the THBS4 function in regulating protective astrogenesis from the subventricular zone (SVZ) niche after injury. Involved in determination of left/right symmetry by modulating the balance between motile and immotile (sensory) cilia at the left-right organiser (LRO). The sequence is that of Neurogenic locus notch homolog protein 1 (NOTCH1) from Cricetulus griseus (Chinese hamster).